The chain runs to 308 residues: UDP-N-acetylenolpyruvoylglucosamine reductase (308 aa).

One can recognise an FAD-binding PCMH-type domain in the interval Thr33–Gly197. The active site involves Arg176. Ser226 (proton donor) is an active-site residue. Glu296 is an active-site residue.

It belongs to the MurB family. The cofactor is FAD.

It localises to the cytoplasm. The enzyme catalyses UDP-N-acetyl-alpha-D-muramate + NADP(+) = UDP-N-acetyl-3-O-(1-carboxyvinyl)-alpha-D-glucosamine + NADPH + H(+). The protein operates within cell wall biogenesis; peptidoglycan biosynthesis. Cell wall formation. The chain is UDP-N-acetylenolpyruvoylglucosamine reductase from Staphylococcus carnosus (strain TM300).